Reading from the N-terminus, the 506-residue chain is Galactose/methyl galactoside import ATP-binding protein MglA (506 aa).

2 consecutive ABC transporter domains span residues 14–249 (LEMS…VGRS) and 264–506 (VILE…SLHL). 46–53 (GENGAGKS) contributes to the ATP binding site.

Belongs to the ABC transporter superfamily. Galactose/methyl galactoside importer (TC 3.A.1.2.3) family. The complex is composed of one ATP-binding protein (MglA), two transmembrane proteins (MglC) and a solute-binding protein (MglB).

It is found in the cell inner membrane. It carries out the reaction D-galactose(out) + ATP + H2O = D-galactose(in) + ADP + phosphate + H(+). The catalysed reaction is methyl beta-D-galactoside(out) + ATP + H2O = methyl beta-D-galactoside(in) + ADP + phosphate + H(+). Functionally, part of the ABC transporter complex MglABC involved in galactose/methyl galactoside import. Responsible for energy coupling to the transport system. The polypeptide is Galactose/methyl galactoside import ATP-binding protein MglA (Shigella boydii serotype 4 (strain Sb227)).